A 1009-amino-acid polypeptide reads, in one-letter code: Protein WBSCR14 homolog (1009 aa).

4 disordered regions span residues 1–20 (MSRGQIIHSGHFMCSNPHDD), 304–354 (MSLG…LHQM), 488–531 (NNQP…DPMM), and 686–728 (ILES…EQEA). 2 stretches are compositionally biased toward polar residues: residues 324–350 (RTPTNDQPSISAQQIPQMRRSASSSAS) and 499–508 (RSNLLPTQND). The span at 511–526 (LPQFLQSTQPTPQPQS) shows a compositional bias: low complexity. The span at 686-695 (ILESPSTSGD) shows a compositional bias: polar residues. Residues 803–856 (RKRILHLHAEQNRRSALKDGFDQLMDIIPDLYSGGVKPTNAVVLAKSADHIRRL) enclose the bHLH domain. The tract at residues 856–877 (LQAEKWDKTQKIDEAKAKIEKL) is leucine-zipper.

As to expression, expressed in intestine, neurons, muscle, hypodermis, excretory cell and other tissues.

It localises to the nucleus. The protein localises to the cytoplasm. Its subcellular location is the mitochondrion. Its function is as follows. Transcription factor that binds to the E box motif 5'-CACGTG-3', probably in a heterodimeric complex with mxl-2. Involved in modulating longevity in response to TOR signaling, dietary restriction, the decline in protein homeostasis associated with normal aging, germline signaling and the insulin-like signaling pathway. Plays a role in autophagy. Involved in regulating migration of the ray 1 precursor cells in the male tail, acting in concert with Wnt and semaphorin signaling pathways. Regulates transcription of genes encoding extracellular matrix (ECM) components which may contribute to the substratum required for migration of the neighboring ray 1 precursor cells. Involved in repressing infection by the microsporidian pathogen N.parisii, probably acting independently of its canonical partner, mxl-2. In Caenorhabditis elegans, this protein is Protein WBSCR14 homolog (mml-1).